The sequence spans 427 residues: Queuine tRNA-ribosyltransferase catalytic subunit (427 aa).

D99 functions as the Proton acceptor in the catalytic mechanism. Substrate contacts are provided by residues D99–F103, D153, Q196, and G223. An RNA binding region spans residues G254–D260. The active-site Nucleophile is the D273. An RNA binding; important for wobble base 34 recognition region spans residues T278–R282. Positions 311, 313, 316, and 341 each coordinate Zn(2+). Residues P395–S427 form a disordered region. Over residues D397–E417 the composition is skewed to basic and acidic residues.

Belongs to the queuine tRNA-ribosyltransferase family. As to quaternary structure, heterodimer of a catalytic subunit and an accessory subunit. Zn(2+) serves as cofactor.

Its subcellular location is the cytoplasm. The enzyme catalyses guanosine(34) in tRNA + queuine = queuosine(34) in tRNA + guanine. In terms of biological role, catalytic subunit of the queuine tRNA-ribosyltransferase (TGT) that catalyzes the base-exchange of a guanine (G) residue with queuine (Q) at position 34 (anticodon wobble position) in tRNAs with GU(N) anticodons (tRNA-Asp, -Asn, -His and -Tyr), resulting in the hypermodified nucleoside queuosine (7-(((4,5-cis-dihydroxy-2-cyclopenten-1-yl)amino)methyl)-7-deazaguanosine). Catalysis occurs through a double-displacement mechanism. The nucleophile active site attacks the C1' of nucleotide 34 to detach the guanine base from the RNA, forming a covalent enzyme-RNA intermediate. The proton acceptor active site deprotonates the incoming queuine, allowing a nucleophilic attack on the C1' of the ribose to form the product. The protein is Queuine tRNA-ribosyltransferase catalytic subunit (Tgt) of Drosophila melanogaster (Fruit fly).